A 362-amino-acid chain; its full sequence is tRNA-specific 2-thiouridylase MnmA (362 aa).

Residues 8-15 (AMSGGVDS) and Met-35 contribute to the ATP site. The tract at residues 95-97 (NPD) is interaction with target base in tRNA. Residue Cys-100 is the Nucleophile of the active site. Cys-100 and Cys-196 are joined by a disulfide. Gly-124 provides a ligand contact to ATP. The interval 146–148 (KDQ) is interaction with tRNA. Cys-196 serves as the catalytic Cysteine persulfide intermediate. The interaction with tRNA stretch occupies residues 303–304 (RY).

The protein belongs to the MnmA/TRMU family.

Its subcellular location is the cytoplasm. The catalysed reaction is S-sulfanyl-L-cysteinyl-[protein] + uridine(34) in tRNA + AH2 + ATP = 2-thiouridine(34) in tRNA + L-cysteinyl-[protein] + A + AMP + diphosphate + H(+). Catalyzes the 2-thiolation of uridine at the wobble position (U34) of tRNA, leading to the formation of s(2)U34. In Chlamydia abortus (strain DSM 27085 / S26/3) (Chlamydophila abortus), this protein is tRNA-specific 2-thiouridylase MnmA.